The following is a 61-amino-acid chain: Adipokinetic prohormone type 2 (61 aa).

The signal sequence occupies residues 1-22 (MTQSCTLTLVLVVAVLAALATA). Gln23 is modified (pyrrolidone carboxylic acid). The residue at position 30 (Trp30) is a Tryptophan amide.

It belongs to the AKH/HRTH/RPCH family. In terms of assembly, adipokinetic hormone precursor-related peptide (APRP) can form three type of disulfide-bond dimers: p1 (alpha-alpha), p2 (alpha-beta), and p3 (beta-beta).

The protein resides in the secreted. Functionally, this hormone, released from cells in the corpora cardiaca, causes release of diglycerides from the fat body and stimulation of muscles to use these diglycerides as an energy source during energy-demanding processes. This Locusta migratoria (Migratory locust) protein is Adipokinetic prohormone type 2.